The chain runs to 170 residues: Protein ripply3 (170 aa).

Residues 40 to 43 carry the WRPW motif motif; it reads WRPW. The ripply homology domain stretch occupies residues 79–114; the sequence is HPVRLYMPKSKTSEYLQHMGKKVLANFPVQATIHFY. Residues 143 to 152 show a composition bias toward polar residues; it reads VNSSRGSGDN. Residues 143-170 are disordered; the sequence is VNSSRGSGDNYSVPGGPKRNISSHTGSA.

Belongs to the ripply family. In terms of assembly, interacts with tbx1 and tle4/grg4.

The protein localises to the nucleus. Its function is as follows. Acts as a transcriptional corepressor. Negative regulator of the transcriptional activity of tbx1 that plays a key role in pharyngeal development. Plays a role in the formation of the anteroposterior (AP) axis during embryonic development; required to establish the posterolateral border of the pre-placodal ectoderm (PPE) acting downstream of the retinoic acid receptor (RAR) signaling. In Xenopus tropicalis (Western clawed frog), this protein is Protein ripply3.